The sequence spans 441 residues: Deoxyguanosinetriphosphate triphosphohydrolase-like protein (441 aa).

Positions 59–250 (RLTHSLEVSQ…MELADDTAYA (192 aa)) constitute an HD domain.

Belongs to the dGTPase family. Type 2 subfamily.

The protein is Deoxyguanosinetriphosphate triphosphohydrolase-like protein of Shewanella loihica (strain ATCC BAA-1088 / PV-4).